The following is a 309-amino-acid chain: tRNA uridine(34) hydroxylase (309 aa).

The Rhodanese domain occupies 130–225 (RGEEVVFFDG…YGEKYGNDGL (96 aa)). Residue Cys185 is the Cysteine persulfide intermediate of the active site.

This sequence belongs to the TrhO family.

It carries out the reaction uridine(34) in tRNA + AH2 + O2 = 5-hydroxyuridine(34) in tRNA + A + H2O. Its function is as follows. Catalyzes oxygen-dependent 5-hydroxyuridine (ho5U) modification at position 34 in tRNAs. In Corynebacterium aurimucosum (strain ATCC 700975 / DSM 44827 / CIP 107346 / CN-1) (Corynebacterium nigricans), this protein is tRNA uridine(34) hydroxylase.